A 113-amino-acid chain; its full sequence is Propane 2-monooxygenase, effector component (113 aa).

The protein belongs to the TmoD/XamoD family. As to quaternary structure, the propane 2-monooxygenase multicomponent enzyme system is composed of an electron transfer component and a monooxygenase component interacting with the effector protein PrmD. The electron transfer component is composed of a reductase (PrmB), and the monooxygenase component is formed by a large subunit (PrmA) and a small subunit (PrmC).

Its function is as follows. Effector component of the propane 2-monooxygenase multicomponent enzyme system which is involved in the degradation of propane via the O2-dependent hydroxylation of propane. The chain is Propane 2-monooxygenase, effector component from Rhodococcus jostii (strain RHA1).